A 340-amino-acid chain; its full sequence is Ketol-acid reductoisomerase (NADP(+)) (340 aa).

One can recognise a KARI N-terminal Rossmann domain in the interval 3–183; it reads VNIYYDKDCD…GGGRTGIIET (181 aa). Residues 26–29, Ser54, and 84–87 contribute to the NADP(+) site; these read FGSQ and DELQ. His109 is a catalytic residue. Residue Gly135 coordinates NADP(+). In terms of domain architecture, KARI C-terminal knotted spans 184–329; sequence TFKDETETDL…KKLRAMMPWI (146 aa). Residues Asp192, Glu196, Glu228, and Glu232 each coordinate Mg(2+). Ser253 provides a ligand contact to substrate.

This sequence belongs to the ketol-acid reductoisomerase family. Mg(2+) serves as cofactor.

It catalyses the reaction (2R)-2,3-dihydroxy-3-methylbutanoate + NADP(+) = (2S)-2-acetolactate + NADPH + H(+). The enzyme catalyses (2R,3R)-2,3-dihydroxy-3-methylpentanoate + NADP(+) = (S)-2-ethyl-2-hydroxy-3-oxobutanoate + NADPH + H(+). Its pathway is amino-acid biosynthesis; L-isoleucine biosynthesis; L-isoleucine from 2-oxobutanoate: step 2/4. It functions in the pathway amino-acid biosynthesis; L-valine biosynthesis; L-valine from pyruvate: step 2/4. Its function is as follows. Involved in the biosynthesis of branched-chain amino acids (BCAA). Catalyzes an alkyl-migration followed by a ketol-acid reduction of (S)-2-acetolactate (S2AL) to yield (R)-2,3-dihydroxy-isovalerate. In the isomerase reaction, S2AL is rearranged via a Mg-dependent methyl migration to produce 3-hydroxy-3-methyl-2-ketobutyrate (HMKB). In the reductase reaction, this 2-ketoacid undergoes a metal-dependent reduction by NADPH to yield (R)-2,3-dihydroxy-isovalerate. The chain is Ketol-acid reductoisomerase (NADP(+)) from Campylobacter curvus (strain 525.92).